We begin with the raw amino-acid sequence, 1722 residues long: Leucine-rich repeat- and IQ domain-containing protein 1 (1722 aa).

Disordered stretches follow at residues 23 to 47 (SLEK…TDSV), 182 to 202 (EDKE…QFQE), 265 to 285 (RTRF…QQNN), and 319 to 367 (QEWK…YEEK). A compositionally biased stretch (acidic residues) spans 38–47 (QSDDSDTDSV). Positions 265–278 (RTRFKDQQEKEKNS) are enriched in basic and acidic residues. Residues 283–312 (QNNAAVKIQAKYKAFVAYQKYGPIIKEQIE) enclose the IQ 1 domain. LRR repeat units follow at residues 819–840 (NLQF…SNCK), 841–861 (KLKY…ENLE), 862–883 (NLCV…DGCT), 884–905 (NIQC…FFLE), 970–991 (NLQQ…CDTP), 992–1013 (TIVY…ENCG), 1014–1035 (LLQI…ENLV), 1036–1057 (LLRE…SSYW), 1060–1081 (LLQN…FHFV), and 1082–1103 (SLEK…IKWF). The region spanning 1117 to 1157 (NPLLQETNWRDSLLKVLPALRILNGNILNSNSESRTEEHNQ) is the LRRCT domain. 2 IQ domains span residues 1335–1364 (KIMA…LHTA) and 1395–1424 (REKA…AIKN). Positions 1506-1524 (SEHTQFNSRSENKTSSWTP) are enriched in polar residues. The tract at residues 1506 to 1534 (SEHTQFNSRSENKTSSWTPESKTSRKSLL) is disordered.

The protein is Leucine-rich repeat- and IQ domain-containing protein 1 (LRRIQ1) of Homo sapiens (Human).